A 251-amino-acid chain; its full sequence is Flap endonuclease Xni (251 aa).

Asp104 lines the Mg(2+) pocket. The region spanning 160 to 249 (VLPRQLPDYW…IDGNLQQLRL (90 aa)) is the 5'-3' exonuclease domain. The K(+) site is built by Leu171, Ala172, Pro180, Val182, and Ile185. Positions 184–189 (GIGPKS) are interaction with DNA.

This sequence belongs to the Xni family. The cofactor is Mg(2+). K(+) is required as a cofactor.

In terms of biological role, has flap endonuclease activity. During DNA replication, flap endonucleases cleave the 5'-overhanging flap structure that is generated by displacement synthesis when DNA polymerase encounters the 5'-end of a downstream Okazaki fragment. This is Flap endonuclease Xni from Salmonella paratyphi A (strain ATCC 9150 / SARB42).